The sequence spans 82 residues: Consomatin Ar1 (82 aa).

A signal peptide spans 1–22 (MQTAYWVVVMMMMVWVTAPVSE). Positions 23–60 (GGKLSDVIWGLVPDDLTPQIILQILNASRHAYRRVRPR) are excised as a propeptide. Residues C64 and C69 are joined by a disulfide bond. The residue at position 66 (W66) is a D-tryptophan. 4-hydroxyproline occurs at positions 70, 71, and 73. The propeptide occupies 74 to 82 (QWIHPLVKR).

Belongs to the conotoxin C superfamily. Consomatin family. As to expression, expressed by the venom duct.

The protein localises to the secreted. In terms of biological role, moderately activates human somatostatin receptors (SSTR) with a preferential activation of SSTR1 and SSTR4. In vivo, does not cause behavioral changes in mice within a few minutes of intracranial injection, but causes a progressive loss of movement thereafter. Four to five hours after injection, mice recover, even with the highest dose tested. Shows antinociception and antihyperalgesia activities in two mouse models of acute pain, most probably by acting outside the central nervous system. The sequence is that of Consomatin Ar1 from Conus arenatus (Sand-dusted cone).